Here is a 406-residue protein sequence, read N- to C-terminus: Ribulose bisphosphate carboxylase large chain (406 aa).

Substrate is bound by residues Asn101 and Thr151. The active-site Proton acceptor is Lys153. Substrate is bound at residue Lys155. 3 residues coordinate Mg(2+): Lys179, Asp181, and Glu182. N6-carboxylysine is present on Lys179. The Proton acceptor role is filled by His272. Residues Arg273, His305, and Ser357 each contribute to the substrate site.

Belongs to the RuBisCO large chain family. Type I subfamily. In terms of assembly, heterohexadecamer of 8 large chains and 8 small chains; disulfide-linked. The disulfide link is formed within the large subunit homodimers. Mg(2+) is required as a cofactor. The disulfide bond which can form in the large chain dimeric partners within the hexadecamer appears to be associated with oxidative stress and protein turnover.

Its subcellular location is the plastid. The protein resides in the chloroplast. It carries out the reaction 2 (2R)-3-phosphoglycerate + 2 H(+) = D-ribulose 1,5-bisphosphate + CO2 + H2O. The enzyme catalyses D-ribulose 1,5-bisphosphate + O2 = 2-phosphoglycolate + (2R)-3-phosphoglycerate + 2 H(+). RuBisCO catalyzes two reactions: the carboxylation of D-ribulose 1,5-bisphosphate, the primary event in carbon dioxide fixation, as well as the oxidative fragmentation of the pentose substrate in the photorespiration process. Both reactions occur simultaneously and in competition at the same active site. This Trichomanes striatum (Fern) protein is Ribulose bisphosphate carboxylase large chain (rbcL).